A 293-amino-acid polypeptide reads, in one-letter code: Protease HtpX homolog (293 aa).

The next 2 membrane-spanning stretches (helical) occupy residues 6-26 and 28-48; these read VAVM…LIGG and SGMV…YWNS. A Zn(2+)-binding site is contributed by His130. Glu131 is a catalytic residue. His134 is a Zn(2+) binding site. 2 consecutive transmembrane segments (helical) span residues 145 to 165 and 172 to 192; these read LTAT…FFGG and PLGA…AMMV. Glu201 provides a ligand contact to Zn(2+).

Belongs to the peptidase M48B family. Zn(2+) serves as cofactor.

The protein resides in the cell inner membrane. In Rhodospirillum rubrum (strain ATCC 11170 / ATH 1.1.1 / DSM 467 / LMG 4362 / NCIMB 8255 / S1), this protein is Protease HtpX homolog.